A 476-amino-acid chain; its full sequence is Cardiolipin synthase (476 aa).

Helical transmembrane passes span 2-22 (HLLI…IIFI) and 31-51 (WAWI…YILF). 2 consecutive PLD phosphodiesterase domains span residues 207 to 234 (INYR…GDEY) and 389 to 416 (EKGF…DIRS). Active-site residues include His212, Lys214, Asp219, His394, Lys396, and Asp401.

Belongs to the phospholipase D family. Cardiolipin synthase subfamily.

The protein resides in the cell membrane. It carries out the reaction 2 a 1,2-diacyl-sn-glycero-3-phospho-(1'-sn-glycerol) = a cardiolipin + glycerol. Its function is as follows. Catalyzes the reversible phosphatidyl group transfer from one phosphatidylglycerol molecule to another to form cardiolipin (CL) (diphosphatidylglycerol) and glycerol. In Clostridium perfringens (strain SM101 / Type A), this protein is Cardiolipin synthase (cls).